The chain runs to 104 residues: Large ribosomal subunit protein bL21 (104 aa).

It belongs to the bacterial ribosomal protein bL21 family. Part of the 50S ribosomal subunit. Contacts protein L20.

In terms of biological role, this protein binds to 23S rRNA in the presence of protein L20. The protein is Large ribosomal subunit protein bL21 of Clostridium botulinum (strain 657 / Type Ba4).